Here is an 81-residue protein sequence, read N- to C-terminus: Photosystem I iron-sulfur center (81 aa).

2 4Fe-4S ferredoxin-type domains span residues 2-31 (SHTV…MVPW) and 39-68 (IASS…IRVY). Cys-11, Cys-14, Cys-17, Cys-21, Cys-48, Cys-51, Cys-54, and Cys-58 together coordinate [4Fe-4S] cluster.

As to quaternary structure, the cyanobacterial PSI reaction center is composed of one copy each of PsaA,B,C,D,E,F,I,J,K,L,M and X, and forms trimeric complexes. Requires [4Fe-4S] cluster as cofactor.

The protein resides in the cellular thylakoid membrane. The enzyme catalyses reduced [plastocyanin] + hnu + oxidized [2Fe-2S]-[ferredoxin] = oxidized [plastocyanin] + reduced [2Fe-2S]-[ferredoxin]. In terms of biological role, apoprotein for the two 4Fe-4S centers FA and FB of photosystem I (PSI); essential for photochemical activity. FB is the terminal electron acceptor of PSI, donating electrons to ferredoxin. The C-terminus interacts with PsaA/B/D and helps assemble the protein into the PSI complex. Required for binding of PsaD and PsaE to PSI. PSI is a plastocyanin/cytochrome c6-ferredoxin oxidoreductase, converting photonic excitation into a charge separation, which transfers an electron from the donor P700 chlorophyll pair to the spectroscopically characterized acceptors A0, A1, FX, FA and FB in turn. In Mastigocladus laminosus (Fischerella sp.), this protein is Photosystem I iron-sulfur center.